Consider the following 142-residue polypeptide: Pro-Viral epidermal growth factor (142 aa).

The signal sequence occupies residues M1–A19. Residues D20–L104 lie on the Extracellular side of the membrane. The N-linked (GlcNAc...) asparagine; by host glycan is linked to N34. Cysteines 71 and 80 form a disulfide. A helical membrane pass occupies residues G105 to F125. At T126–L142 the chain is on the cytoplasmic side.

Belongs to the orthopoxvirus OPG019 family. As to quaternary structure, interacts with host EGFR. Post-translationally, cleaved at the cell surface by host ADAM10, thereby releasing the secreted form of VGF.

Its subcellular location is the host membrane. The protein localises to the secreted. Stimulates cellular proliferation (hyperplasia)and mobility around infected cells to promote rapid and efficient spread of infection. This effect is beneficial for virus replication in vivo, because poxviruses replicate possibly better in proliferating cells than in quiescent cells. Acts by binding host EGFR, inducing its dimerization, autophosphorylation and leading to activation of several cellular pathways regulating cell proliferation or cell survival. The activation by host EGFR of mitogen activated protein kinases (MAPK) and extracellular-signal regulated kinases (ERK) are essential for the positive effect of vaccinia growth factor on poxvirus virulence in vivo. The protein is Pro-Viral epidermal growth factor (OPG019) of Cynomys gunnisoni (Gunnison's prairie dog).